A 115-amino-acid chain; its full sequence is Large ribosomal subunit protein P2 (115 aa).

At methionine 1 the chain carries N-acetylmethionine. Serine 19 is modified (phosphoserine). Lysine 21 bears the N6-acetyllysine; alternate mark. Lysine 21 is subject to N6-succinyllysine; alternate. Over residues 76–90 (APGSAAPAAGSAPAA) the composition is skewed to low complexity. Positions 76-115 (APGSAAPAAGSAPAAAEEKKDEKKEESEESDDDMGFGLFD) are disordered. Residues serine 79 and serine 86 each carry the phosphoserine modification. The segment covering 91–101 (AEEKKDEKKEE) has biased composition (basic and acidic residues). A phosphoserine mark is found at serine 102 and serine 105.

Belongs to the eukaryotic ribosomal protein P1/P2 family. In terms of assembly, heterodimer with RPLP1 at the lateral ribosomal stalk of the large ribosomal subunit.

Plays an important role in the elongation step of protein synthesis. This Rattus norvegicus (Rat) protein is Large ribosomal subunit protein P2 (Rplp2).